The chain runs to 217 residues: 3,4-dihydroxy-2-butanone 4-phosphate synthase (217 aa).

D-ribulose 5-phosphate-binding positions include 37–38 (RE), Asp42, 150–154 (RRGHT), and Glu174. Position 38 (Glu38) interacts with Mg(2+). A Mg(2+)-binding site is contributed by His153.

Belongs to the DHBP synthase family. In terms of assembly, homodimer. The cofactor is Mg(2+). Mn(2+) serves as cofactor.

It carries out the reaction D-ribulose 5-phosphate = (2S)-2-hydroxy-3-oxobutyl phosphate + formate + H(+). The protein operates within cofactor biosynthesis; riboflavin biosynthesis; 2-hydroxy-3-oxobutyl phosphate from D-ribulose 5-phosphate: step 1/1. Its function is as follows. Catalyzes the conversion of D-ribulose 5-phosphate to formate and 3,4-dihydroxy-2-butanone 4-phosphate. This Yersinia pseudotuberculosis serotype O:1b (strain IP 31758) protein is 3,4-dihydroxy-2-butanone 4-phosphate synthase.